A 160-amino-acid polypeptide reads, in one-letter code: UPF0479 membrane protein YER190C-B (160 aa).

The next 2 helical transmembrane spans lie at isoleucine 39–glutamine 59 and valine 136–histidine 156.

It belongs to the UPF0479 family.

The protein localises to the membrane. The polypeptide is UPF0479 membrane protein YER190C-B (Saccharomyces cerevisiae (strain ATCC 204508 / S288c) (Baker's yeast)).